The sequence spans 562 residues: tRNA (guanine(37)-N(1))-methyltransferase (562 aa).

A mitochondrion-targeting transit peptide spans M1 to G41. Residues H243, D281–L282, and N340 each bind S-adenosyl-L-methionine. Basic and acidic residues predominate over residues A523–P534. Residues A523–M562 form a disordered region.

This sequence belongs to the class I-like SAM-binding methyltransferase superfamily. TRM5/TYW2 family. In terms of assembly, monomer.

It is found in the mitochondrion matrix. The protein localises to the nucleus. The protein resides in the cytoplasm. It carries out the reaction guanosine(37) in tRNA + S-adenosyl-L-methionine = N(1)-methylguanosine(37) in tRNA + S-adenosyl-L-homocysteine + H(+). Functionally, specifically methylates the N1 position of guanosine-37 in various cytoplasmic and mitochondrial tRNAs. Methylation is not dependent on the nature of the nucleoside 5' of the target nucleoside. This is the first step in the biosynthesis of wybutosine (yW), a modified base adjacent to the anticodon of tRNAs and required for accurate decoding. The sequence is that of tRNA (guanine(37)-N(1))-methyltransferase from Aedes aegypti (Yellowfever mosquito).